The chain runs to 112 residues: UPF0342 protein SPH_1504 (112 aa).

Belongs to the UPF0342 family.

This is UPF0342 protein SPH_1504 from Streptococcus pneumoniae (strain Hungary19A-6).